Reading from the N-terminus, the 146-residue chain is Nucleoside diphosphate kinase (146 aa).

6 residues coordinate ATP: Lys11, Phe59, Arg87, Thr93, Arg104, and Asn114. Catalysis depends on His117, which acts as the Pros-phosphohistidine intermediate.

This sequence belongs to the NDK family. As to quaternary structure, homotetramer. Requires Mg(2+) as cofactor.

Its subcellular location is the cytoplasm. It catalyses the reaction a 2'-deoxyribonucleoside 5'-diphosphate + ATP = a 2'-deoxyribonucleoside 5'-triphosphate + ADP. It carries out the reaction a ribonucleoside 5'-diphosphate + ATP = a ribonucleoside 5'-triphosphate + ADP. Its function is as follows. Major role in the synthesis of nucleoside triphosphates other than ATP. The ATP gamma phosphate is transferred to the NDP beta phosphate via a ping-pong mechanism, using a phosphorylated active-site intermediate. This is Nucleoside diphosphate kinase from Anaeromyxobacter sp. (strain Fw109-5).